A 204-amino-acid polypeptide reads, in one-letter code: Somatotropin (204 aa).

A signal peptide spans 1 to 17 (MDRAILLLSVVCLVVSS). Gln18 bears the Pyrrolidone carboxylic acid mark. Position 36 (His36) interacts with Zn(2+). A disulfide bond links Cys69 and Cys177. Zn(2+) is bound at residue Glu186. Cys194 and Cys202 are joined by a disulfide.

Belongs to the somatotropin/prolactin family.

It is found in the secreted. Its function is as follows. Growth hormone plays an important role in growth control and is involved in the regulation of several anabolic processes. Implicated as an osmoregulatory substance important for seawater adaptation. The sequence is that of Somatotropin (gh) from Odontesthes argentinensis (Marine silverside).